Reading from the N-terminus, the 262-residue chain is Hydroxyethylthiazole kinase (262 aa).

M50 is a binding site for substrate. The ATP site is built by R125 and T171. G198 is a substrate binding site.

Belongs to the Thz kinase family. Mg(2+) serves as cofactor.

It carries out the reaction 5-(2-hydroxyethyl)-4-methylthiazole + ATP = 4-methyl-5-(2-phosphooxyethyl)-thiazole + ADP + H(+). It participates in cofactor biosynthesis; thiamine diphosphate biosynthesis; 4-methyl-5-(2-phosphoethyl)-thiazole from 5-(2-hydroxyethyl)-4-methylthiazole: step 1/1. Its function is as follows. Catalyzes the phosphorylation of the hydroxyl group of 4-methyl-5-beta-hydroxyethylthiazole (THZ). The polypeptide is Hydroxyethylthiazole kinase (Shigella boydii serotype 4 (strain Sb227)).